The following is an 875-amino-acid chain: MSLERTVVMLNEDDTQGRPLADLVKEAAKSIAPLWPISSFIARHPWMGLEGELFADAADRWQQVYGIDLYPPMTVFYTALKKGEIDPVFVERRLQSWLDKQSLPVPRHEAERLCRSFLWNDTVPEEAFSLPEMAQLAEGTQLRPMAVQPISKRLDQIAKRLDQQMIKWCKLFYDESGGTWTLPQREQGFYQAWRQLVVTDPSLSKDERKRFSGWPHDKHEALNYALEKLGIRDEDVVAYLEAHLLALPGWAGMAVWRSHRAGDEVGGLIDYLAVRLSIEWVLTAPHLPLHGEENGERRDVLPLLAAWFYWTGMTPEDWRRLRTNEQQARLAFADRFWRIDRHHLWLEAWEDTDEAKLKEAVSTRHRMSEPEQVAAQLLFCIDVRSEPFRRHLEAAGPFETYGCAGFFGLPIQTRVLDSEDVHPSCPAIVDPRHEIREVAPPEEVEPYRFRRDMFRFVSKTFKKMKQHVLAGLLLPEMSGPWLGLHTLARSAAPAWAGQVIRYTKKSVEQKPKTTLSLHYHEGDETTGLPIGLTNEEQVEYVKQLLVTIGLTSSFAPLVVVCGHGSETTNNPYASALDCGACGGVAGAFNARVFAALANLPSVRAELAKEGIVIPDETVFVAAEHITTVDELRWLEVPPLSEAAQQSFDRLKQALHDVSRQANAERMMKLPHVGGKPRDPVAEAQRRAVDWSEIRPEWGLAGNTAFFIGRRALTKGVHLDGRVFLHSYDWRDDPTGEALARIIAGPATVGQWINLQYYASTVAPHYYGSGDKTTQTVTGGIGVMQGNGSDLLAGLPWQSVVSSDRELFHFPLRLLVIIEAPSYYIERLLNENSEFRRKVENGWLRLSSIDPNSGAWMKWGDTHSLSVWSREMGIGK.

Zn(2+) contacts are provided by C380, D382, H563, and C578.

Belongs to the inorganic carbon transporter (TC 9.A.2) DabA family. Forms a complex with DabB. Requires Zn(2+) as cofactor.

The protein resides in the cell membrane. Functionally, part of an energy-coupled inorganic carbon pump. The sequence is that of Probable inorganic carbon transporter subunit DabA from Geobacillus thermodenitrificans (strain NG80-2).